The primary structure comprises 420 residues: Pyridinium-3,5-bisthiocarboxylic acid mononucleotide nickel insertion protein (420 aa).

Residues 81–104 form a disordered region; that stretch reads NHEHKHNHHEIKNDEPAHSHEHHH. Positions 90–99 are enriched in basic and acidic residues; sequence EIKNDEPAHS.

This sequence belongs to the LarC family.

It catalyses the reaction Ni(II)-pyridinium-3,5-bisthiocarboxylate mononucleotide = pyridinium-3,5-bisthiocarboxylate mononucleotide + Ni(2+). In terms of biological role, involved in the biosynthesis of a nickel-pincer cofactor ((SCS)Ni(II) pincer complex). Binds Ni(2+), and functions in nickel delivery to pyridinium-3,5-bisthiocarboxylic acid mononucleotide (P2TMN), to form the mature cofactor. Is thus probably required for the activation of nickel-pincer cofactor-dependent enzymes. The chain is Pyridinium-3,5-bisthiocarboxylic acid mononucleotide nickel insertion protein from Clostridium acetobutylicum (strain ATCC 824 / DSM 792 / JCM 1419 / IAM 19013 / LMG 5710 / NBRC 13948 / NRRL B-527 / VKM B-1787 / 2291 / W).